A 236-amino-acid polypeptide reads, in one-letter code: Phosphoribosylaminoimidazole-succinocarboxamide synthase (236 aa).

It belongs to the SAICAR synthetase family.

It carries out the reaction 5-amino-1-(5-phospho-D-ribosyl)imidazole-4-carboxylate + L-aspartate + ATP = (2S)-2-[5-amino-1-(5-phospho-beta-D-ribosyl)imidazole-4-carboxamido]succinate + ADP + phosphate + 2 H(+). It participates in purine metabolism; IMP biosynthesis via de novo pathway; 5-amino-1-(5-phospho-D-ribosyl)imidazole-4-carboxamide from 5-amino-1-(5-phospho-D-ribosyl)imidazole-4-carboxylate: step 1/2. This chain is Phosphoribosylaminoimidazole-succinocarboxamide synthase, found in Streptococcus equi subsp. zooepidemicus (strain MGCS10565).